The primary structure comprises 263 residues: Cell division protein DivIB (263 aa).

Over 1–32 (MNPGQDREKIVNIEERIPKIKEQRKQKANRRL) the chain is Cytoplasmic. The chain crosses the membrane as a helical span at residues 33–53 (ISFIMLFFIMVLIIVYLQTPI). The alpha stretch occupies residues 51–123 (TPISKVSTIS…NKINIAIEEY (73 aa)). Residues 54–123 (SKVSTISVTG…NKINIAIEEY (70 aa)) form the POTRA domain. The Extracellular portion of the chain corresponds to 54 to 263 (SKVSTISVTG…DKAAKKEDEN (210 aa)). The tract at residues 124–251 (KAIAYLEKDD…EVATYFEEFG (128 aa)) is beta. Residues 229-263 (SQLSSNKKGIIHLEVATYFEEFGKNDKAAKKEDEN) form a gamma region.

The protein belongs to the FtsQ/DivIB family. DivIB subfamily. Interacts with FtsL, DivIC and PBP-2B.

It is found in the cell membrane. Cell division protein that may be involved in stabilizing or promoting the assembly of the division complex. Plays an essential role in division at high temperatures, maybe by protecting FtsL from degradation or by promoting formation of the FtsL-DivIC complex. May modulate the transpeptidase activity of PBP-2B. Also required for efficient sporulation at all temperatures. Could be directly involved in the engulfment process or be required to form a sporulation septum competent for engulfment. Influences the Spo0J/Soj system of chromosome segregation. In Bacillus subtilis (strain 168), this protein is Cell division protein DivIB.